The sequence spans 413 residues: Multifunctional CCA protein (413 aa).

ATP is bound by residues G8 and R11. G8 and R11 together coordinate CTP. The Mg(2+) site is built by D21 and D23. R91, R137, and R140 together coordinate ATP. Residues R91, R137, and R140 each coordinate CTP. Positions 228-329 (TGIHTLMTLS…VKLFDNIDAW (102 aa)) constitute an HD domain.

This sequence belongs to the tRNA nucleotidyltransferase/poly(A) polymerase family. Bacterial CCA-adding enzyme type 1 subfamily. In terms of assembly, monomer. Can also form homodimers and oligomers. Requires Mg(2+) as cofactor. Ni(2+) serves as cofactor.

It catalyses the reaction a tRNA precursor + 2 CTP + ATP = a tRNA with a 3' CCA end + 3 diphosphate. The enzyme catalyses a tRNA with a 3' CCA end + 2 CTP + ATP = a tRNA with a 3' CCACCA end + 3 diphosphate. Catalyzes the addition and repair of the essential 3'-terminal CCA sequence in tRNAs without using a nucleic acid template. Adds these three nucleotides in the order of C, C, and A to the tRNA nucleotide-73, using CTP and ATP as substrates and producing inorganic pyrophosphate. tRNA 3'-terminal CCA addition is required both for tRNA processing and repair. Also involved in tRNA surveillance by mediating tandem CCA addition to generate a CCACCA at the 3' terminus of unstable tRNAs. While stable tRNAs receive only 3'-terminal CCA, unstable tRNAs are marked with CCACCA and rapidly degraded. The sequence is that of Multifunctional CCA protein from Enterobacter sp. (strain 638).